Reading from the N-terminus, the 618-residue chain is MPIQVLPPQLANQIAAGEVVERPASVVKELVENSLDAGATRIDIDIERGGAKLIRIRDNGCGIKKEELALALARHATSKIASLDDLEAIISLGFRGEALASISSVSRLTLTSRTAEQSEAWQAYAEGRDMDVTVKPAAHPVGTTLEVLDLFYNTPARRKFMRTEKTEFNHIDEIIRRIALARFDVTLNLSHNGKLVRQYRAVARDGQKERRLGAICGTPFLEQALAIEWQHGDLTLRGWVADPNHTTTALAEIQYCYVNGRMMRDRLINHAIRQACEEKLGADQQPAFVLYLEIDPHQVDVNVHPAKHEVRFHQSRLVHDFIYQGVLSVLQQQTETTLPLEEIAPAPRHVPENRIAAGRNHFAEPVVPTAAREPATPRYSGGASGGSGGRQSVGGWSHAQPGYQKQQGEVYRALLQTPAASSTPEPVAPALDGHSQSFGRVLTIVGGDCALLEHGGNIQLLSLPVAERWLRQAQLTPGQSPVCAQPLLIPLRLKVSADEKASLQKAQPFLGELGIEFQSDAQHVTIRAVPLPLRQQNLQILIPELIGYLAQQTTFATVNIAQWIARNVQSEHPQWSMAQAISLLADVERLCPQLVKAPPGGLLQPVDLHSAMNALKHE.

The interval A371–P401 is disordered. Residues G382–S392 are compositionally biased toward gly residues.

It belongs to the DNA mismatch repair MutL/HexB family.

Its function is as follows. This protein is involved in the repair of mismatches in DNA. It is required for dam-dependent methyl-directed DNA mismatch repair. May act as a 'molecular matchmaker', a protein that promotes the formation of a stable complex between two or more DNA-binding proteins in an ATP-dependent manner without itself being part of a final effector complex. The chain is DNA mismatch repair protein MutL from Salmonella arizonae (strain ATCC BAA-731 / CDC346-86 / RSK2980).